The primary structure comprises 478 residues: Alpha,alpha-trehalose-phosphate synthase [UDP-forming] (478 aa).

D-glucose 6-phosphate-binding residues include tyrosine 89 and aspartate 143. Residues arginine 280 and lysine 285 each coordinate UDP. Arginine 280 and lysine 285 together coordinate UDP-alpha-D-glucose. Arginine 318 provides a ligand contact to D-glucose 6-phosphate. UDP contacts are provided by residues isoleucine 357 and 383–387 (LVSYE). UDP-alpha-D-glucose is bound by residues isoleucine 357 and 379-387 (DGMNLVSYE).

This sequence belongs to the glycosyltransferase 20 family.

The catalysed reaction is D-glucose 6-phosphate + UDP-alpha-D-glucose = alpha,alpha-trehalose 6-phosphate + UDP + H(+). Its pathway is carbohydrate biosynthesis. Its activity is regulated as follows. Inhibited by validoxylamine A, a non-reactive trehalose analog. Functionally, synthase catalytic subunit of the trehalose synthase complex that catalyzes the production of trehalose from glucose-6-phosphate and UDP-alpha-D-glucose in a two step process. The chain is Alpha,alpha-trehalose-phosphate synthase [UDP-forming] from Candida albicans (strain SC5314 / ATCC MYA-2876) (Yeast).